The following is a 42-amino-acid chain: Photosystem I reaction center subunit IX (42 aa).

A helical membrane pass occupies residues 7 to 27; that stretch reads YLSVAPVLATLWFGSLAGLLI.

Belongs to the PsaJ family.

It is found in the plastid. It localises to the chloroplast thylakoid membrane. In terms of biological role, may help in the organization of the PsaE and PsaF subunits. In Chloranthus spicatus (Chulantree), this protein is Photosystem I reaction center subunit IX.